Consider the following 64-residue polypeptide: Ferredoxin-2 (64 aa).

2 consecutive 4Fe-4S ferredoxin-type domains span residues 3 to 31 (KYLY…MSSA) and 34 to 64 (YAEV…WREE). The [4Fe-4S] cluster site is built by Cys-12, Cys-15, Cys-18, and Cys-54.

In terms of assembly, homodimer. It depends on [4Fe-4S] cluster as a cofactor.

In terms of biological role, ferredoxins are iron-sulfur proteins that transfer electrons in a wide variety of metabolic reactions. This is Ferredoxin-2 from Nitratidesulfovibrio vulgaris (strain DSM 19637 / Miyazaki F) (Desulfovibrio vulgaris).